A 492-amino-acid polypeptide reads, in one-letter code: V-type proton ATPase subunit B 1 (492 aa).

The protein belongs to the ATPase alpha/beta chains family. In terms of assembly, V-ATPase is a heteromultimeric enzyme composed of a peripheral catalytic V1 complex (main components: subunits A, B, C, D, E, and F) attached to an integral membrane V0 proton pore complex (main component: the proteolipid protein).

Non-catalytic subunit of the peripheral V1 complex of vacuolar ATPase. V-ATPase is responsible for acidifying a variety of intracellular compartments in eukaryotic cells. This chain is V-type proton ATPase subunit B 1, found in Acetabularia acetabulum (Mermaid's wine glass).